Here is a 262-residue protein sequence, read N- to C-terminus: MNNRPIRLLTSGRAGLGAGALITAVVLLIALGAVWTLVAFADGCPDAEVTFARGTGEPPGIGRVGQAFVDSLRQQTGMEIGVYPVNYAASRLQLHGGDGANDAISHIKSMASSCPNTKLVLGGYSQGATVIDIVAGVPLGSISFGSPLPAAYADNVAAVAVFGNPSNRAGGSLSSLSPLFGSKAIDLCNPTDPICHVGPGNEFSGHIDDYIPTYTTQAASFVVQRLRAGSVPHLPGSVPQLPGSVLQMPGTAAPAPESLHGR.

A signal peptide spans 1-41 (MNNRPIRLLTSGRAGLGAGALITAVVLLIALGAVWTLVAFA). Residues Cys44 and Cys114 are joined by a disulfide bond. Ser125 (nucleophile) is an active-site residue. Cys188 and Cys195 are disulfide-bonded. Residue Asp192 is part of the active site. His206 (proton donor/acceptor) is an active-site residue. The disordered stretch occupies residues 241 to 262 (LPGSVLQMPGTAAPAPESLHGR).

It belongs to the cutinase family.

It localises to the secreted. The polypeptide is Probable carboxylesterase Culp3 (cut3) (Mycobacterium tuberculosis (strain CDC 1551 / Oshkosh)).